We begin with the raw amino-acid sequence, 228 residues long: Ribosomal RNA small subunit methyltransferase G (228 aa).

Residues glycine 89, leucine 94, 140–141 (VE), and arginine 159 each bind S-adenosyl-L-methionine.

The protein belongs to the methyltransferase superfamily. RNA methyltransferase RsmG family.

Its subcellular location is the cytoplasm. The catalysed reaction is guanosine(527) in 16S rRNA + S-adenosyl-L-methionine = N(7)-methylguanosine(527) in 16S rRNA + S-adenosyl-L-homocysteine. Specifically methylates the N7 position of guanine in position 527 of 16S rRNA. The chain is Ribosomal RNA small subunit methyltransferase G from Burkholderia ambifaria (strain ATCC BAA-244 / DSM 16087 / CCUG 44356 / LMG 19182 / AMMD) (Burkholderia cepacia (strain AMMD)).